A 455-amino-acid polypeptide reads, in one-letter code: Chromosomal replication initiator protein DnaA (455 aa).

Residues 1-82 are domain I, interacts with DnaA modulators; it reads MNRNTSSLWA…NPDFVVKLVE (82 aa). Residues 82–117 are domain II; that stretch reads EGVKPAPKQNNIVTTKQNAETAVDSEQHLQSVEFKT. The interval 118–335 is domain III, AAA+ region; the sequence is GLNSNHLFEN…GALNRVIANA (218 aa). Residues glycine 163, glycine 165, lysine 166, and threonine 167 each coordinate ATP. The segment at 336 to 455 is domain IV, binds dsDNA; it reads EFTGKTITID…WSNLIRTLSA (120 aa).

It belongs to the DnaA family. In terms of assembly, oligomerizes as a right-handed, spiral filament on DNA at oriC.

Its subcellular location is the cytoplasm. In terms of biological role, plays an essential role in the initiation and regulation of chromosomal replication. ATP-DnaA binds to the origin of replication (oriC) to initiate formation of the DNA replication initiation complex once per cell cycle. Binds the DnaA box (a 9 base pair repeat at the origin) and separates the double-stranded (ds)DNA. Forms a right-handed helical filament on oriC DNA; dsDNA binds to the exterior of the filament while single-stranded (ss)DNA is stabiized in the filament's interior. The ATP-DnaA-oriC complex binds and stabilizes one strand of the AT-rich DNA unwinding element (DUE), permitting loading of DNA polymerase. After initiation quickly degrades to an ADP-DnaA complex that is not apt for DNA replication. Binds acidic phospholipids. The polypeptide is Chromosomal replication initiator protein DnaA (Actinobacillus succinogenes (strain ATCC 55618 / DSM 22257 / CCUG 43843 / 130Z)).